The following is a 509-amino-acid chain: ATP synthase subunit alpha (509 aa).

Position 169–176 (169–176) interacts with ATP; that stretch reads GDRQTGKT.

This sequence belongs to the ATPase alpha/beta chains family. F-type ATPases have 2 components, CF(1) - the catalytic core - and CF(0) - the membrane proton channel. CF(1) has five subunits: alpha(3), beta(3), gamma(1), delta(1), epsilon(1). CF(0) has three main subunits: a(1), b(2) and c(9-12). The alpha and beta chains form an alternating ring which encloses part of the gamma chain. CF(1) is attached to CF(0) by a central stalk formed by the gamma and epsilon chains, while a peripheral stalk is formed by the delta and b chains.

It is found in the cell inner membrane. The enzyme catalyses ATP + H2O + 4 H(+)(in) = ADP + phosphate + 5 H(+)(out). Functionally, produces ATP from ADP in the presence of a proton gradient across the membrane. The alpha chain is a regulatory subunit. The protein is ATP synthase subunit alpha of Mesorhizobium japonicum (strain LMG 29417 / CECT 9101 / MAFF 303099) (Mesorhizobium loti (strain MAFF 303099)).